Here is a 233-residue protein sequence, read N- to C-terminus: Metallo-beta-lactamase domain-containing protein 1 (233 aa).

Zn(2+) is bound by residues His96, His98, Asp100, His101, His152, Asp174, and His213.

It belongs to the metallo-beta-lactamase superfamily. Glyoxalase II family. Homodimer. Requires Zn(2+) as cofactor.

It is found in the cytoplasm. The protein resides in the cytosol. Its subcellular location is the nucleus. The enzyme catalyses a ribonucleotidyl-ribonucleotide-RNA + H2O = a 3'-end ribonucleotide-RNA + a 5'-end 5'-phospho-ribonucleoside-RNA + H(+). In terms of biological role, endoribonuclease that catalyzes the hydrolysis of histone-coding pre-mRNA 3'-end. Involved in histone pre-mRNA processing during the S-phase of the cell cycle, which is required for entering/progressing through S-phase. Cleaves histone pre-mRNA at a major and a minor cleavage site after the 5'-ACCCA-3' and the 5'-ACCCACA-3' sequence, respectively, and located downstream of the stem-loop. May require the presence of the HDE element located at the histone pre-RNA 3'-end to avoid non-specific cleavage. The sequence is that of Metallo-beta-lactamase domain-containing protein 1 (mblac1) from Xenopus laevis (African clawed frog).